Reading from the N-terminus, the 461-residue chain is Ufm1-specific protease 2 (461 aa).

Active-site residues include Cys-294, Asp-418, and His-420.

This sequence belongs to the peptidase C78 family. As to expression, expressed at high level in brain, kidney, stomach, skeletal muscle, liver, pancreas, spleen and testis.

The protein resides in the endoplasmic reticulum. It localises to the cytoplasm. It is found in the nucleus. Functionally, thiol-dependent isopeptidase that specifically cleaves UFM1, a ubiquitin-like modifier protein, from conjugated proteins, such as CD274/PD-L1, CYB5R3, DDRGK1, MRE11, RPL26/uL24, TRIP4 and RPL26/uL24. While it is also able to mediate the processing of UFM1 precursors, a prerequisite for conjugation reactions, UFSP2 mainly acts as a protein deUFMylase that mediates deconjugation of UFM1 from target proteins. Mediates deUFMylation of RPL26/uL24, a critical step to release the UFM1 ribosome E3 ligase (UREL) complex during the recycling of 60S ribosome subunits from the endoplasmic reticulum. Catalyzes deUFMylation of TRIP4, regulating intracellular nuclear receptors transactivation and thereby regulate cell proliferation and differentiation. The protein is Ufm1-specific protease 2 of Mus musculus (Mouse).